The following is a 68-amino-acid chain: Phycobilisome 7.8 kDa linker polypeptide, allophycocyanin-associated, core (68 aa).

One can recognise a CpcD-like domain in the interval 2 to 57 (ARLFKVTACVPSQTRIRTQRELQNTYFTKLVPFENWFREQQRIMKMGGKIVKVELA).

This sequence belongs to the phycobilisome linker protein family.

The protein localises to the cellular thylakoid membrane. In terms of biological role, rod linker protein, associated with allophycocyanin. Linker polypeptides determine the state of aggregation and the location of the disk-shaped phycobiliprotein units within the phycobilisome and modulate their spectroscopic properties in order to mediate a directed and optimal energy transfer. In Microchaete diplosiphon (Fremyella diplosiphon), this protein is Phycobilisome 7.8 kDa linker polypeptide, allophycocyanin-associated, core (apcC).